Reading from the N-terminus, the 2046-residue chain is Protein TIC 214 (2046 aa).

6 helical membrane-spanning segments follow: residues 18 to 38, 54 to 74, 79 to 99, 125 to 145, 163 to 183, and 214 to 234; these read VSGP…LPFG, LYGI…FLSM, IYAA…YTFC, ILSL…LLAN, ISFM…FINL, and TFSV…PLIF. 3 disordered regions span residues 278 to 299, 320 to 472, and 1833 to 1898; these read DEDR…EDRS, ARSV…VPRE, and AKDS…EDEI. Basic and acidic residues-rich tracts occupy residues 322–335, 344–368, and 378–457; these read SVAE…EHRS, SVAE…RSVA, and AKKD…RSVA. Residues 1833-1866 are compositionally biased toward low complexity; that stretch reads AKDSNANDINAKDSNANDINANDSNAKDSNANDI. Residues 1882–1898 are compositionally biased toward basic and acidic residues; the sequence is NAKDSNADVPKKKEDEI.

The protein belongs to the TIC214 family. In terms of assembly, part of the Tic complex.

Its subcellular location is the plastid. It is found in the chloroplast inner membrane. In terms of biological role, involved in protein precursor import into chloroplasts. May be part of an intermediate translocation complex acting as a protein-conducting channel at the inner envelope. This is Protein TIC 214 from Pinus koraiensis (Korean pine).